Reading from the N-terminus, the 32-residue chain is Fibrinolytic enzyme (32 aa).

Post-translationally, the N-terminus is blocked.

Its activity is regulated as follows. Inhibited by phenylmethanesulfonyl fluoride (PMSF). Not inhibited by EDTA, EGTA, beta-mercaptoethanol, indoacetamide, benzamidine, aprotinin, pepstatin A and trypsin inhibitor. Plasmin-like serine protease. Has fibrinolytic and fibrinogenolytic but not plasminogenolytic activity. Cleaves after Arg and Lys residues. The chain is Fibrinolytic enzyme from Hediste japonica (Polychaete worm).